The primary structure comprises 222 residues: MAFVKSGWLLRQSTILKRWKKNWFDLWSDGHLIYYDDQTRQNIEDKVHMPMDCINIRTGQECRDTQPPDGKSKDCMLQIVCRDGKTISLCAESTDDCLAWKFTLQDSRTNTAYVGSAVMTDETSVVSSPPPYTAYAAPAPEQAYGYGPYGGAYPPGTQVVYAANGQAYAVPYQYPYAGLYGQQPANQVIIRERYRDNDSDLALGMLAGAATGMALGSLFWVF.

Positions 2–109 (AFVKSGWLLR…WKFTLQDSRT (108 aa)) constitute a PH domain. Residue Lys20 participates in a 1,2-diacyl-sn-glycero-3-phospho-L-serine binding.

It localises to the recycling endosome membrane. In terms of biological role, involved in retrograde transport of recycling endosomes. The sequence is that of Pleckstrin homology domain-containing family B member 2 (PLEKHB2) from Homo sapiens (Human).